Reading from the N-terminus, the 520-residue chain is Beta-galactoside-specific lectin 4 (520 aa).

A glycan (N-linked (GlcNAc...) asparagine) is linked at asparagine 107. Residue glutamate 159 is part of the active site. A disulfide bridge connects residues cysteine 240 and cysteine 266. Positions 241–265 are cleaved as a propeptide — connecting peptide; that stretch reads GERPSSSDVRYWPLVIRPVIADDVT. The region spanning 269-396 is the Ricin B-type lectin 1 domain; sequence SEPTVRIVGR…YTLGQGWLAG (128 aa). Residue 284–286 participates in D-galactose binding; it reads DVR. A glycan (N-linked (GlcNAc...) asparagine) is linked at asparagine 322. Cysteine 325 and cysteine 342 are disulfide-bonded. N-linked (GlcNAc...) asparagine glycans are attached at residues asparagine 357 and asparagine 397. Residues 400-520 form the Ricin B-type lectin 2 domain; the sequence is APREVTIYGF…KPNQMWLPVP (121 aa). 2 disulfide bridges follow: cysteine 413/cysteine 426 and cysteine 451/cysteine 467. 494–496 contributes to the D-galactose binding site; sequence DVA.

Belongs to the ribosome-inactivating protein family. Type 2 RIP subfamily. As to quaternary structure, disulfide-linked dimer of A and B chains.

The catalysed reaction is Endohydrolysis of the N-glycosidic bond at one specific adenosine on the 28S rRNA.. Functionally, the A chain is responsible for inhibiting protein synthesis through the catalytic inactivation of 60S ribosomal subunits by removing adenine from position 4,324 of 28S rRNA. The B chain binds to cell receptors and probably facilitates the entry into the cell of the A chain; B chains are also responsible for cell agglutination (lectin activity). Inhibits growth of the human tumor cell line Molt4. The chain is Beta-galactoside-specific lectin 4 from Viscum album (European mistletoe).